The chain runs to 67 residues: DNA-directed RNA polymerase subunit omega (67 aa).

This sequence belongs to the RNA polymerase subunit omega family. As to quaternary structure, the RNAP catalytic core consists of 2 alpha, 1 beta, 1 beta' and 1 omega subunit. When a sigma factor is associated with the core the holoenzyme is formed, which can initiate transcription.

The enzyme catalyses RNA(n) + a ribonucleoside 5'-triphosphate = RNA(n+1) + diphosphate. Promotes RNA polymerase assembly. Latches the N- and C-terminal regions of the beta' subunit thereby facilitating its interaction with the beta and alpha subunits. This is DNA-directed RNA polymerase subunit omega from Ralstonia nicotianae (strain ATCC BAA-1114 / GMI1000) (Ralstonia solanacearum).